The following is a 228-amino-acid chain: L-ribulose-5-phosphate 4-epimerase UlaF (228 aa).

Substrate is bound by residues 26-27 (GN), 43-44 (SG), and 72-73 (SS). Aspartate 74, histidine 93, and histidine 95 together coordinate Zn(2+). Aspartate 118 acts as the Proton donor/acceptor in catalysis. Histidine 167 contacts Zn(2+). Tyrosine 225 acts as the Proton donor/acceptor in catalysis.

It belongs to the aldolase class II family. AraD/FucA subfamily. Zn(2+) is required as a cofactor.

It catalyses the reaction L-ribulose 5-phosphate = D-xylulose 5-phosphate. It functions in the pathway cofactor degradation; L-ascorbate degradation; D-xylulose 5-phosphate from L-ascorbate: step 4/4. In terms of biological role, catalyzes the isomerization of L-ribulose 5-phosphate to D-xylulose 5-phosphate. Is involved in the anaerobic L-ascorbate utilization. The sequence is that of L-ribulose-5-phosphate 4-epimerase UlaF from Escherichia coli O17:K52:H18 (strain UMN026 / ExPEC).